Reading from the N-terminus, the 310-residue chain is Fatty acid elongase 1 (310 aa).

The Lumenal segment spans residues 1–63 (MVSDWKNFCL…VGKQPLSEPR (63 aa)). Residues 64 to 84 (PVLLFIAMYYVVIFGGRSLVK) traverse the membrane as a helical segment. Residues 85–100 (SCKPLKLRFISQVHNL) lie on the Cytoplasmic side of the membrane. Residues 101–121 (MLTSVSFLWLILMVEQMLPIV) form a helical membrane-spanning segment. Residues 122–141 (YRHGLYFAVCNVESWTQPME) lie on the Lumenal side of the membrane. The helical transmembrane segment at 142–163 (TLYYLNYMTKFVEFADTVLMVL) threads the bilayer. At 164–174 (KHRKLTFLHTY) the chain is on the cytoplasmic side. The short motif at 172 to 176 (HTYHH) is the HxxHH motif element. The chain crosses the membrane as a helical span at residues 175–196 (HHGATALLCYNQLVGYTAVTWV). At 197–201 (PVTLN) the chain is on the lumenal side. A helical transmembrane segment spans residues 202–223 (LAVHVLMYWYYFLSASGIRVWW). Residues 224-234 (KAWVTRLQIVQ) are Cytoplasmic-facing. A helical membrane pass occupies residues 235 to 255 (FMLDLIVVYYVLYQKIVAAYF). Over 256–271 (KNACTPQCEDCLGSMT) the chain is Lumenal. A helical membrane pass occupies residues 272-292 (AIAAGAAILTSYLFLFISFYI). At 293-310 (EVYKRGSASGKKKINKNN) the chain is on the cytoplasmic side. The Di-lysine motif signature appears at 304 to 307 (KKIN).

It belongs to the ELO family.

The protein localises to the endoplasmic reticulum membrane. It carries out the reaction a very-long-chain acyl-CoA + malonyl-CoA + H(+) = a very-long-chain 3-oxoacyl-CoA + CO2 + CoA. The catalysed reaction is tetradecanoyl-CoA + malonyl-CoA + H(+) = 3-oxohexadecanoyl-CoA + CO2 + CoA. The enzyme catalyses (9Z)-tetradecenoyl-CoA + malonyl-CoA + H(+) = 3-oxo-(11Z)-hexadecenoyl-CoA + CO2 + CoA. Component of a microsomal membrane bound medium-chain fatty acid elongation system, which extends medium-chain-length fatty acids to long-chain fatty acids. Component of elongase I, which extends 12-16-carbon fatty acyl-CoAs such as lauroyl-CoA to 14-18-carbon fatty acids by incorporation of malonyl-CoA. This Saccharomyces cerevisiae (strain ATCC 204508 / S288c) (Baker's yeast) protein is Fatty acid elongase 1.